A 320-amino-acid chain; its full sequence is MGKSMTALRVIGDIGGTYARFAVAERGKYSELQHLSVSKYAALKDALGEYLAALPRDLRPTRGALAVAGPVSGDEVKLTNLNWSFSITALKADLGMSSLVVVNDFAATAMSVPYLPEADCYPIGPPQSKTSGPVGVIGPGTGLGVSALVPDAGRWILLPGEGGHSTLPPATQAESLIVEVLRTHWPHVSAERALSGAGLVNLYQALCSIEGKRPDPLSPADVTDRAMRGSDPTCVKAFEVFCSMLGTVAGDLALTIGATGGIYIAGGILLRFKEAFASSPFRDRFEDKGRFQDYLRRIPTLLILEESPALLGLANLPLEP.

An ATP-binding site is contributed by 12-17 (GDIGGT).

It belongs to the bacterial glucokinase family.

The protein localises to the cytoplasm. The enzyme catalyses D-glucose + ATP = D-glucose 6-phosphate + ADP + H(+). This is Glucokinase from Nitrobacter hamburgensis (strain DSM 10229 / NCIMB 13809 / X14).